A 382-amino-acid polypeptide reads, in one-letter code: Galactokinase (382 aa).

34–37 (EHTD) is a binding site for substrate. Residue 124–130 (GAGLSSS) participates in ATP binding. Mg(2+) is bound by residues serine 130 and glutamate 162. Aspartate 174 (proton acceptor) is an active-site residue. Residue tyrosine 223 participates in substrate binding.

This sequence belongs to the GHMP kinase family. GalK subfamily.

Its subcellular location is the cytoplasm. It catalyses the reaction alpha-D-galactose + ATP = alpha-D-galactose 1-phosphate + ADP + H(+). Its pathway is carbohydrate metabolism; galactose metabolism. Catalyzes the transfer of the gamma-phosphate of ATP to D-galactose to form alpha-D-galactose-1-phosphate (Gal-1-P). This is Galactokinase from Escherichia coli O127:H6 (strain E2348/69 / EPEC).